A 380-amino-acid polypeptide reads, in one-letter code: Cytochrome b (380 aa).

Helical transmembrane passes span 33-53 (FGSL…FLAM), 77-98 (WLIR…FIHV), 113-133 (WNIG…GYVL), and 178-198 (FFAF…VHLL). Residues His83 and His97 each coordinate heme b. 2 residues coordinate heme b: His182 and His196. Residue His201 participates in a ubiquinone binding. 4 helical membrane passes run 226–246 (IKDI…VLFF), 288–308 (LGGV…PLIN), 320–340 (ITQA…WIGG), and 347–367 (FTMI…MFMF).

The protein belongs to the cytochrome b family. As to quaternary structure, the cytochrome bc1 complex contains 11 subunits: 3 respiratory subunits (MT-CYB, CYC1 and UQCRFS1), 2 core proteins (UQCRC1 and UQCRC2) and 6 low-molecular weight proteins (UQCRH/QCR6, UQCRB/QCR7, UQCRQ/QCR8, UQCR10/QCR9, UQCR11/QCR10 and a cleavage product of UQCRFS1). This cytochrome bc1 complex then forms a dimer. It depends on heme b as a cofactor.

The protein resides in the mitochondrion inner membrane. Its function is as follows. Component of the ubiquinol-cytochrome c reductase complex (complex III or cytochrome b-c1 complex) that is part of the mitochondrial respiratory chain. The b-c1 complex mediates electron transfer from ubiquinol to cytochrome c. Contributes to the generation of a proton gradient across the mitochondrial membrane that is then used for ATP synthesis. In Calomys musculinus (Drylands vesper mouse), this protein is Cytochrome b (MT-CYB).